Consider the following 222-residue polypeptide: ATP-dependent dethiobiotin synthetase BioD (222 aa).

Residue 12-17 participates in ATP binding; it reads DVGKTF. Position 16 (T16) interacts with Mg(2+). K37 is a catalytic residue. Substrate is bound at residue S41. ATP contacts are provided by residues D54 and 113–116; that span reads EGAG. Mg(2+) is bound by residues D54 and E113.

It belongs to the dethiobiotin synthetase family. In terms of assembly, homodimer. Requires Mg(2+) as cofactor.

It localises to the cytoplasm. It carries out the reaction (7R,8S)-7,8-diammoniononanoate + CO2 + ATP = (4R,5S)-dethiobiotin + ADP + phosphate + 3 H(+). Its pathway is cofactor biosynthesis; biotin biosynthesis; biotin from 7,8-diaminononanoate: step 1/2. Functionally, catalyzes a mechanistically unusual reaction, the ATP-dependent insertion of CO2 between the N7 and N8 nitrogen atoms of 7,8-diaminopelargonic acid (DAPA, also called 7,8-diammoniononanoate) to form a ureido ring. This is ATP-dependent dethiobiotin synthetase BioD from Anoxybacillus flavithermus (strain DSM 21510 / WK1).